Reading from the N-terminus, the 1466-residue chain is DNA-directed RNA polymerase subunit beta'' (1466 aa).

4 residues coordinate Zn(2+): cysteine 220, cysteine 296, cysteine 303, and cysteine 306. Positions threonine 618–aspartate 725 are disordered. Acidic residues-rich tracts occupy residues glutamate 621 to glutamate 631, aspartate 639 to glycine 651, and leucine 707 to aspartate 725.

It belongs to the RNA polymerase beta' chain family. RpoC2 subfamily. In terms of assembly, in plastids the minimal PEP RNA polymerase catalytic core is composed of four subunits: alpha, beta, beta', and beta''. When a (nuclear-encoded) sigma factor is associated with the core the holoenzyme is formed, which can initiate transcription. Zn(2+) serves as cofactor.

The protein localises to the plastid. The protein resides in the chloroplast. The catalysed reaction is RNA(n) + a ribonucleoside 5'-triphosphate = RNA(n+1) + diphosphate. Functionally, DNA-dependent RNA polymerase catalyzes the transcription of DNA into RNA using the four ribonucleoside triphosphates as substrates. The protein is DNA-directed RNA polymerase subunit beta'' of Agrostis stolonifera (Creeping bentgrass).